Reading from the N-terminus, the 448-residue chain is Tubulin beta-2 chain (448 aa).

Residues glutamine 11, glutamate 69, serine 138, glycine 142, threonine 143, glycine 144, asparagine 204, and asparagine 226 each contribute to the GTP site. Position 69 (glutamate 69) interacts with Mg(2+). Residues 421 to 448 (EYQQYQDATADEDGEYEDELDGQEEEDM) form a disordered region. Over residues 429 to 448 (TADEDGEYEDELDGQEEEDM) the composition is skewed to acidic residues.

The protein belongs to the tubulin family. As to quaternary structure, dimer of alpha and beta chains. A typical microtubule is a hollow water-filled tube with an outer diameter of 25 nm and an inner diameter of 15 nM. Alpha-beta heterodimers associate head-to-tail to form protofilaments running lengthwise along the microtubule wall with the beta-tubulin subunit facing the microtubule plus end conferring a structural polarity. Microtubules usually have 13 protofilaments but different protofilament numbers can be found in some organisms and specialized cells. It depends on Mg(2+) as a cofactor.

It localises to the cytoplasm. Its subcellular location is the cytoskeleton. Functionally, tubulin is the major constituent of microtubules, a cylinder consisting of laterally associated linear protofilaments composed of alpha- and beta-tubulin heterodimers. Microtubules grow by the addition of GTP-tubulin dimers to the microtubule end, where a stabilizing cap forms. Below the cap, tubulin dimers are in GDP-bound state, owing to GTPase activity of alpha-tubulin. The polypeptide is Tubulin beta-2 chain (TUBB2) (Eleusine indica (Goosegrass)).